The primary structure comprises 150 residues: Large ribosomal subunit protein bL9 (150 aa).

The protein belongs to the bacterial ribosomal protein bL9 family.

Binds to the 23S rRNA. The protein is Large ribosomal subunit protein bL9 of Burkholderia cenocepacia (strain HI2424).